The chain runs to 348 residues: MKLSEFKFALPAELVAQHPAANRDEAKMMVINRATGTIEHKIFKDIINYFDEGDIMVMNNTKVFPARLYGNKEKTGAKIEVFLLRELNAELHLWDVLVDPARKIRVGNKLYFGESDLVAEVVDNTTSRGRTIRFLFDGNSEDFSKIIETIGETPLPRYIKRPIEEADKDRYQTIFAENKGAVAAPTAGLHFTKQVMKRMEIKGVNFAPLTLHVGLGSFRTVDVEDLTKHKMDSENFIIESTTADVVNKALDNKKRVCAIGTTSMRALESSVSANNRLKQNAGWTDRFIFPPYDFKIANCMLTNFHMPESTLYMMACAFGGYELMTKAYKTAIKEKYNFLSYGDVMLII.

This sequence belongs to the QueA family. In terms of assembly, monomer.

It is found in the cytoplasm. The enzyme catalyses 7-aminomethyl-7-carbaguanosine(34) in tRNA + S-adenosyl-L-methionine = epoxyqueuosine(34) in tRNA + adenine + L-methionine + 2 H(+). Its pathway is tRNA modification; tRNA-queuosine biosynthesis. Its function is as follows. Transfers and isomerizes the ribose moiety from AdoMet to the 7-aminomethyl group of 7-deazaguanine (preQ1-tRNA) to give epoxyqueuosine (oQ-tRNA). The polypeptide is S-adenosylmethionine:tRNA ribosyltransferase-isomerase (Cytophaga hutchinsonii (strain ATCC 33406 / DSM 1761 / CIP 103989 / NBRC 15051 / NCIMB 9469 / D465)).